The following is a 270-amino-acid chain: 4-hydroxy-tetrahydrodipicolinate reductase (270 aa).

NAD(+) is bound by residues 11–16 and Glu-37; that span reads GCQGRM. An NADP(+)-binding site is contributed by Arg-38. Residues 101–103 and 125–128 contribute to the NAD(+) site; these read GTT and ASNF. The Proton donor/acceptor role is filled by His-158. His-159 is a binding site for (S)-2,3,4,5-tetrahydrodipicolinate. The active-site Proton donor is the Lys-162. 168-169 contributes to the (S)-2,3,4,5-tetrahydrodipicolinate binding site; sequence GT.

It belongs to the DapB family.

The protein localises to the cytoplasm. It catalyses the reaction (S)-2,3,4,5-tetrahydrodipicolinate + NAD(+) + H2O = (2S,4S)-4-hydroxy-2,3,4,5-tetrahydrodipicolinate + NADH + H(+). The enzyme catalyses (S)-2,3,4,5-tetrahydrodipicolinate + NADP(+) + H2O = (2S,4S)-4-hydroxy-2,3,4,5-tetrahydrodipicolinate + NADPH + H(+). The protein operates within amino-acid biosynthesis; L-lysine biosynthesis via DAP pathway; (S)-tetrahydrodipicolinate from L-aspartate: step 4/4. Catalyzes the conversion of 4-hydroxy-tetrahydrodipicolinate (HTPA) to tetrahydrodipicolinate. The sequence is that of 4-hydroxy-tetrahydrodipicolinate reductase from Tolumonas auensis (strain DSM 9187 / NBRC 110442 / TA 4).